Here is a 575-residue protein sequence, read N- to C-terminus: Kelch repeat and BTB domain-containing protein 8 (575 aa).

Residues 23–91 (TDIVVEVDHG…AYTSRVILTE (69 aa)) form the BTB domain. The BACK domain occupies 126 to 228 (SIGVFIFADH…MEDAFIEKIP (103 aa)). Kelch repeat units follow at residues 310–364 (DIYI…YCCG), 365–415 (KMYA…EHKE), 417–455 (IYVL…VYKD), 457–506 (IYYI…LFQN), and 516–562 (QVTV…FECA).

The protein belongs to the KBTBD8 family. As to quaternary structure, component of the BCR(KBTBD8) E3 ubiquitin ligase complex, at least composed of CUL3, KBTBD8 and RBX1.

Its subcellular location is the cytoplasm. It localises to the cytoskeleton. The protein localises to the spindle. The protein resides in the golgi apparatus. In terms of biological role, substrate-specific adapter of a BCR (BTB-CUL3-RBX1) E3 ubiquitin ligase complex that acts as a regulator of neural crest specification. The BCR(KBTBD8) complex acts by mediating monoubiquitination of NOLC1 and TCOF1: monoubiquitination promotes the formation of a NOLC1-TCOF1 complex that acts as a platform to connect RNA polymerase I with enzymes responsible for ribosomal processing and modification, leading to remodel the translational program of differentiating cells in favor of neural crest specification. In Rattus norvegicus (Rat), this protein is Kelch repeat and BTB domain-containing protein 8.